Here is a 444-residue protein sequence, read N- to C-terminus: UDP-N-acetylmuramoylalanine--D-glutamate ligase (444 aa).

An ATP-binding site is contributed by 113–119 (GSNGKST).

Belongs to the MurCDEF family.

It is found in the cytoplasm. It catalyses the reaction UDP-N-acetyl-alpha-D-muramoyl-L-alanine + D-glutamate + ATP = UDP-N-acetyl-alpha-D-muramoyl-L-alanyl-D-glutamate + ADP + phosphate + H(+). It participates in cell wall biogenesis; peptidoglycan biosynthesis. Cell wall formation. Catalyzes the addition of glutamate to the nucleotide precursor UDP-N-acetylmuramoyl-L-alanine (UMA). The chain is UDP-N-acetylmuramoylalanine--D-glutamate ligase from Blochmanniella floridana.